The primary structure comprises 199 residues: Nitrile hydratase subunit alpha (199 aa).

Cys-102, Cys-105, Ser-106, and Cys-107 together coordinate Fe(3+). Cysteine sulfinic acid (-SO2H) is present on Cys-105. Cys-107 bears the Cysteine sulfenic acid (-SOH) mark.

It belongs to the nitrile hydratase subunit alpha family. Heterodimer of an alpha and a beta chain. Fe(3+) is required as a cofactor. Post-translationally, oxidation on Cys-105 is essential for the activity. Oxidation on Cys-107 stabilizes the Fe-NO ligand coordinated in the inactive form.

It catalyses the reaction an aliphatic primary amide = an aliphatic nitrile + H2O. Its activity is regulated as follows. Inactivated by oxidation of Cys-107 to a sulfenic acid. NHase catalyzes the hydration of various nitrile compounds to the corresponding amides. Industrial production of acrylamide is now being developed using some of the enzymes of this class. The sequence is that of Nitrile hydratase subunit alpha (nthA) from Rhodococcus sp.